The chain runs to 325 residues: MDSPSNATVPCGFLLQGFSEFPHLRPVLFLLLLGVHLATLGGNLLILVAVASMPSRQPMLLFLCQLSAIELCYTLVVVPRSLVDLSTPGHRRGSPISFLSCAFQMQMFVALGGAECFLLAAMAYDRYVAICHPLRYAAVVTPGLCARLALACCLRGLAVSVGLTVAIFHLPFCGSRLLLHFFCDITALLHLACTRSYADELPLLGACLVLLLLPSVLILASYGAIAAALRRLRCPKGRGKAASTCALHLAVTFLHYGCATFMYVRPRASYSPRLDRTLALVYTNVTPLLCPLIYSLRNREITAALSRVLGRRRPGQAPGGDLREL.

Residues 1–26 (MDSPSNATVPCGFLLQGFSEFPHLRP) lie on the Extracellular side of the membrane. An N-linked (GlcNAc...) asparagine glycan is attached at N6. A helical membrane pass occupies residues 27 to 47 (VLFLLLLGVHLATLGGNLLIL). The Cytoplasmic segment spans residues 48–57 (VAVASMPSRQ). A helical transmembrane segment spans residues 58-78 (PMLLFLCQLSAIELCYTLVVV). Residues 79–101 (PRSLVDLSTPGHRRGSPISFLSC) lie on the Extracellular side of the membrane. Residues 102 to 122 (AFQMQMFVALGGAECFLLAAM) form a helical membrane-spanning segment. Residues 123 to 147 (AYDRYVAICHPLRYAAVVTPGLCAR) lie on the Cytoplasmic side of the membrane. The chain crosses the membrane as a helical span at residues 148–168 (LALACCLRGLAVSVGLTVAIF). Topologically, residues 169–171 (HLP) are extracellular. Residues 172–192 (FCGSRLLLHFFCDITALLHLA) traverse the membrane as a helical segment. The Cytoplasmic segment spans residues 193–200 (CTRSYADE). Residues 201-221 (LPLLGACLVLLLLPSVLILAS) traverse the membrane as a helical segment. Residues 222 to 243 (YGAIAAALRRLRCPKGRGKAAS) lie on the Extracellular side of the membrane. A helical membrane pass occupies residues 244 to 264 (TCALHLAVTFLHYGCATFMYV). The Cytoplasmic portion of the chain corresponds to 265–325 (RPRASYSPRL…QAPGGDLREL (61 aa)).

This sequence belongs to the G-protein coupled receptor 1 family.

It is found in the cell membrane. In terms of biological role, odorant receptor. This is Olfactory receptor 10AC1 (OR10AC1) from Homo sapiens (Human).